Reading from the N-terminus, the 360-residue chain is uncharacterized protein (360 aa).

The segment at 1–33 (MSGRRKGCSAATASSSSSSPPSRLPPLPGHARR) is disordered.

The protein belongs to the herpesviridae US22 family.

This is an uncharacterized protein from Human cytomegalovirus (strain AD169) (HHV-5).